The primary structure comprises 493 residues: Betaine aldehyde dehydrogenase (493 aa).

K(+) contacts are provided by serine 32, isoleucine 33, and aspartate 99. 156 to 158 lines the NAD(+) pocket; that stretch reads GAW. Lysine 168 serves as the catalytic Charge relay system. NAD(+)-binding positions include 182 to 185 and 235 to 238; these read KPSE and SVPT. Position 250 (leucine 250) interacts with K(+). Glutamate 256 (proton acceptor) is an active-site residue. NAD(+)-binding residues include glycine 258, cysteine 290, and glutamate 390. The active-site Nucleophile is the cysteine 290. Cysteine 290 carries the post-translational modification Cysteine sulfenic acid (-SOH). Residues lysine 460 and glycine 463 each coordinate K(+). Residue glutamate 467 is the Charge relay system of the active site.

Belongs to the aldehyde dehydrogenase family. Dimer of dimers. K(+) is required as a cofactor.

The enzyme catalyses betaine aldehyde + NAD(+) + H2O = glycine betaine + NADH + 2 H(+). It functions in the pathway amine and polyamine biosynthesis; betaine biosynthesis via choline pathway; betaine from betaine aldehyde: step 1/1. Functionally, involved in the biosynthesis of the osmoprotectant glycine betaine. Catalyzes the irreversible oxidation of betaine aldehyde to the corresponding acid. This chain is Betaine aldehyde dehydrogenase, found in Agrobacterium fabrum (strain C58 / ATCC 33970) (Agrobacterium tumefaciens (strain C58)).